The primary structure comprises 253 residues: 5'/3'-nucleotidase SurE (253 aa).

Residues Asp8, Asp9, Ser39, and Asn92 each coordinate a divalent metal cation.

It belongs to the SurE nucleotidase family. Requires a divalent metal cation as cofactor.

The protein resides in the cytoplasm. It catalyses the reaction a ribonucleoside 5'-phosphate + H2O = a ribonucleoside + phosphate. It carries out the reaction a ribonucleoside 3'-phosphate + H2O = a ribonucleoside + phosphate. The catalysed reaction is [phosphate](n) + H2O = [phosphate](n-1) + phosphate + H(+). Its function is as follows. Nucleotidase with a broad substrate specificity as it can dephosphorylate various ribo- and deoxyribonucleoside 5'-monophosphates and ribonucleoside 3'-monophosphates with highest affinity to 3'-AMP. Also hydrolyzes polyphosphate (exopolyphosphatase activity) with the preference for short-chain-length substrates (P20-25). Might be involved in the regulation of dNTP and NTP pools, and in the turnover of 3'-mononucleotides produced by numerous intracellular RNases (T1, T2, and F) during the degradation of various RNAs. In Salmonella paratyphi B (strain ATCC BAA-1250 / SPB7), this protein is 5'/3'-nucleotidase SurE.